Here is a 406-residue protein sequence, read N- to C-terminus: Protein translocase subunit SecD (406 aa).

6 consecutive transmembrane segments (helical) span residues 8-28 (IVIL…NPIN), 240-260 (MAAM…YRVA), 262-282 (FVAD…MCAI), 289-309 (PGIA…VIIF), 334-354 (FPAI…LFFF), and 361-381 (GFAV…IFIT).

It belongs to the SecD/SecF family. SecD subfamily. As to quaternary structure, forms a complex with SecF. Part of the essential Sec protein translocation apparatus which comprises SecA, SecYEG and auxiliary proteins SecDF. Other proteins may also be involved.

The protein localises to the cell inner membrane. Part of the Sec protein translocase complex. Interacts with the SecYEG preprotein conducting channel. SecDF uses the proton motive force (PMF) to complete protein translocation after the ATP-dependent function of SecA. This chain is Protein translocase subunit SecD, found in Sebaldella termitidis (strain ATCC 33386 / NCTC 11300).